A 380-amino-acid polypeptide reads, in one-letter code: Chaperone protein DnaJ (380 aa).

The J domain occupies Asp-5 to Gly-70. The segment at Gly-137 to His-215 adopts a CR-type zinc-finger fold. Cys-150, Cys-153, Cys-167, Cys-170, Cys-189, Cys-192, Cys-203, and Cys-206 together coordinate Zn(2+). CXXCXGXG motif repeat units follow at residues Cys-150–Gly-157, Cys-167–Gly-174, Cys-189–Gly-196, and Cys-203–Gly-210. Positions Ile-222–Pro-247 are disordered.

The protein belongs to the DnaJ family. Homodimer. Zn(2+) serves as cofactor.

It is found in the cytoplasm. Its function is as follows. Participates actively in the response to hyperosmotic and heat shock by preventing the aggregation of stress-denatured proteins and by disaggregating proteins, also in an autonomous, DnaK-independent fashion. Unfolded proteins bind initially to DnaJ; upon interaction with the DnaJ-bound protein, DnaK hydrolyzes its bound ATP, resulting in the formation of a stable complex. GrpE releases ADP from DnaK; ATP binding to DnaK triggers the release of the substrate protein, thus completing the reaction cycle. Several rounds of ATP-dependent interactions between DnaJ, DnaK and GrpE are required for fully efficient folding. Also involved, together with DnaK and GrpE, in the DNA replication of plasmids through activation of initiation proteins. The polypeptide is Chaperone protein DnaJ (Nitrosococcus oceani (strain ATCC 19707 / BCRC 17464 / JCM 30415 / NCIMB 11848 / C-107)).